The chain runs to 102 residues: Small ribosomal subunit protein uS10 (102 aa).

It belongs to the universal ribosomal protein uS10 family. In terms of assembly, part of the 30S ribosomal subunit.

Functionally, involved in the binding of tRNA to the ribosomes. The polypeptide is Small ribosomal subunit protein uS10 (Streptococcus pyogenes serotype M3 (strain SSI-1)).